Here is an 888-residue protein sequence, read N- to C-terminus: MACLHETRTPSPSFGGFVSTLSEASMRKLDPDTSDCTPEKDLTPTQCVLRDVVPLGGQGGGGPSPSPGGEPPPEPFANSVLQLHEQDTGGPGGATGSPESRASRVRADEVRLQCQSGSGFLEGLFGCLRPVWTMIGKAYSTEHKQQQEDLWEVPFEEILDLQWVGSGAQGAVFLGRFHGEEVAVKKVRDLKETDIKHLRKLKHPNIITFKGVCTQAPCYCILMEFCAQGQLYEVLRAGRPVTPSLLVDWSMGIAGGMNYLHLHKIIHRDLKSPNMLITYDDVVKISDFGTSKELSDKSTKMSFAGTVAWMAPEVIRNEPVSEKVDIWSFGVVLWELLTGEIPYKDVDSSAIIWGVGSNSLHLPVPSSCPDGFKILLRQCWNRKPRNRPSFRQILLHLDIASADVLSTPQETYFKSQAEWREEVKLHFEKIKSEGTCLHRLEEELVMRRREELRHALDIREHYERKLERANNLYMELNALMLQLELKERELLRREQALERRCPGLLKSHTSRSLLHGNTMEKLIKKRNVPQKLSPHSKRPDILKTESLLPKLDAALSGVGLPGCPKAPPSPGRSRRGKTRHRKASAKGSCGDLPGLRAALPPHEPGGLGSPGGLGVGPTAWDASPPALRGLHHDLLLRKMSSSSPDLLSAALGARGRGATGGARDPGSPPPPQGDTPPSEGSAPGSTSPDSPGGAKGEPPPPVGPGEGVGLLGTGREGTTGRGGSRAGYQHLTPAALLYRAAVTRSQKRGISSEEEEGEVDSEVELPPSQRWPQGPNMRQSLSTFSSENPSDVEEGTASEPSPSGTPEVGSTNTDERPDERSDDMCSQGSEIPLDLPTSEVVPERETSSLPMQHQDDQGPNPEDSDCDSTELDNSNSIDALPPPASLPP.

The span at 26–42 (MRKLDPDTSDCTPEKDL) shows a compositional bias: basic and acidic residues. The interval 26-104 (MRKLDPDTSD…TGSPESRASR (79 aa)) is disordered. A phosphothreonine mark is found at T37 and T43. Over residues 64-75 (SPSPGGEPPPEP) the composition is skewed to pro residues. Positions 158 to 399 (ILDLQWVGSG…FRQILLHLDI (242 aa)) constitute a Protein kinase domain. Residues 164-172 (VGSGAQGAV) and K185 each bind ATP. D269 (proton acceptor) is an active-site residue. Leucine-zipper regions lie at residues 423-444 (VKLH…EEEL) and 476-497 (LNAL…EQAL). Residues 557–620 (GVGLPGCPKA…GGLGVGPTAW (64 aa)) are disordered. Positions 572–584 (RSRRGKTRHRKAS) are enriched in basic residues. Gly residues predominate over residues 605 to 615 (GGLGSPGGLGV). At S640 the chain carries Phosphoserine. Disordered regions lie at residues 654-731 (RGRG…YQHL) and 743-888 (TRSQ…SLPP). Positions 704-725 (PGEGVGLLGTGREGTTGRGGSR) are enriched in gly residues. The segment covering 752-763 (SEEEEGEVDSEV) has biased composition (acidic residues). Polar residues-rich tracts occupy residues 776-789 (NMRQ…SENP) and 798-812 (SEPS…GSTN). The span at 813–823 (TDERPDERSDD) shows a compositional bias: basic and acidic residues.

The protein belongs to the protein kinase superfamily. STE Ser/Thr protein kinase family. MAP kinase kinase kinase subfamily. Homodimer. Interacts with MBIP. It depends on Mg(2+) as a cofactor. Post-translationally, autophosphorylated on Ser/Thr. Phosphorylated in cytosol under basal conditions and dephosphorylated when membrane-associated. The activity of MAP3K12 can be regulated through its proteasomal degradation. APOE, through a receptor-mediated mechanism, activates MAP3K12 by preventing its proteasomal degradation.

The protein localises to the cytoplasm. The protein resides in the cell membrane. The enzyme catalyses L-seryl-[protein] + ATP = O-phospho-L-seryl-[protein] + ADP + H(+). It catalyses the reaction L-threonyl-[protein] + ATP = O-phospho-L-threonyl-[protein] + ADP + H(+). In terms of biological role, part of a non-canonical MAPK signaling pathway. Activated by APOE, enhances the AP-1-mediated transcription of APP, via a MAP kinase signal transduction pathway composed of MAP2K7 and MAPK1/ERK2 and MAPK3/ERK1. May be an activator of the JNK/SAPK pathway. The chain is Mitogen-activated protein kinase kinase kinase 12 (Map3k12) from Rattus norvegicus (Rat).